Reading from the N-terminus, the 407-residue chain is MKYDHLLVRYGELTLKGSNRKKFVNQLRNNVNKSLKGLDGFVVKGKRDRMYIELEDHADINEITYRLSKIFGIKSISPVLKVEKTIEAMSAAAIKFAQQFEENSTFKIDVKRADKNFPMDTYELQRELGGAILKHFDNISVNVKRPDHEIRVEVRLDAIYMYEEVVPGSGGLPVGTGGKTLLMLSGGIDSPVAGMEVMRRGVTIEAIHFHSPPFTSDQAKEKVIELTRILAERVGPIKLHIVPFTELQKQVNKVVHPRYTMTSTRRMMMRVADKLVHQIGALAIVNGENLGQVASQTLHSMYAINNVTSTPVLRPLLTYDKEEIIIKSKEIGTFETSIQPFEDCCTIFTPKNPVTEPNFDKVVQYESVFDFEEMINRAVENIETLEITSDYKTIKEQQTNQLINDFL.

Residues 61–165 (NEITYRLSKI…LDAIYMYEEV (105 aa)) enclose the THUMP domain. ATP is bound by residues 183–184 (ML), 208–209 (HF), arginine 265, glycine 287, and glutamine 296.

It belongs to the ThiI family.

It is found in the cytoplasm. The catalysed reaction is [ThiI sulfur-carrier protein]-S-sulfanyl-L-cysteine + a uridine in tRNA + 2 reduced [2Fe-2S]-[ferredoxin] + ATP + H(+) = [ThiI sulfur-carrier protein]-L-cysteine + a 4-thiouridine in tRNA + 2 oxidized [2Fe-2S]-[ferredoxin] + AMP + diphosphate. It carries out the reaction [ThiS sulfur-carrier protein]-C-terminal Gly-Gly-AMP + S-sulfanyl-L-cysteinyl-[cysteine desulfurase] + AH2 = [ThiS sulfur-carrier protein]-C-terminal-Gly-aminoethanethioate + L-cysteinyl-[cysteine desulfurase] + A + AMP + 2 H(+). Its pathway is cofactor biosynthesis; thiamine diphosphate biosynthesis. Functionally, catalyzes the ATP-dependent transfer of a sulfur to tRNA to produce 4-thiouridine in position 8 of tRNAs, which functions as a near-UV photosensor. Also catalyzes the transfer of sulfur to the sulfur carrier protein ThiS, forming ThiS-thiocarboxylate. This is a step in the synthesis of thiazole, in the thiamine biosynthesis pathway. The sulfur is donated as persulfide by IscS. In Staphylococcus aureus (strain MSSA476), this protein is Probable tRNA sulfurtransferase.